The following is a 419-amino-acid chain: D-galactonate dehydratase family member SEN1436 (419 aa).

Residues Q45 and H129 each coordinate substrate. The active-site Proton donor/acceptor is Y160. D225 provides a ligand contact to Mg(2+). Residue H227 is the Proton donor/acceptor of the active site. The Mg(2+) site is built by E251 and E277. Residues E277, R298, H327, D331, and E354 each coordinate substrate.

It belongs to the mandelate racemase/muconate lactonizing enzyme family. GalD subfamily. Homotetramer. The cofactor is Mg(2+).

It carries out the reaction D-gluconate = 2-dehydro-3-deoxy-D-gluconate + H2O. Has low D-gluconate dehydratase activity (in vitro), suggesting that it has no significant role in D-gluconate degradation in vivo. Has no detectable activity with a panel of 70 other acid sugars (in vitro). In Salmonella enteritidis PT4 (strain P125109), this protein is D-galactonate dehydratase family member SEN1436.